Consider the following 90-residue polypeptide: Large ribosomal subunit protein bL27 (90 aa).

Residues 1 to 20 are disordered; that stretch reads MAHKKAGGSSRNGRDSAGKR.

Belongs to the bacterial ribosomal protein bL27 family.

The chain is Large ribosomal subunit protein bL27 from Nitrobacter hamburgensis (strain DSM 10229 / NCIMB 13809 / X14).